Consider the following 641-residue polypeptide: Isomalto-dextranase (641 aa).

Positions 1–39 (MMNLSRRTLLTTGSAATLAYALGMAGSAQAATAVTARPG) form a signal peptide, tat-type signal. Catalysis depends on aspartate 227, which acts as the Nucleophile. Aspartate 288 acts as the Proton donor in catalysis. Residues 500–640 (TRYPAAFAAW…AINLNWIELD (141 aa)) form the CBM6 domain. Residues 556 to 588 (SGYRYANATDDNTTSKTTTKKANPEKADRSTVD) are disordered. The segment covering 561-576 (ANATDDNTTSKTTTKK) has biased composition (low complexity). Basic and acidic residues predominate over residues 577 to 586 (ANPEKADRST).

Belongs to the glycosyl hydrolase 27 family. Predicted to be exported by the Tat system. The position of the signal peptide cleavage has been experimentally proven.

The protein localises to the secreted. The catalysed reaction is Hydrolysis of (1-&gt;6)-alpha-D-glucosidic linkages in polysaccharides, to remove successive isomaltose units from the non-reducing ends of the chains.. In Arthrobacter globiformis, this protein is Isomalto-dextranase (imd).